Here is a 468-residue protein sequence, read N- to C-terminus: MIDNNHLRKRKNINLVIGLGKSGVWAAKYLRSIDKRVIIWESKDGKEFLEIKTELEELNILVSLNKEFVFKEIHPFIKEIESVVVSPSIPYDHETIIKLKKKGIKVIGEINVAWEILKETNWIGITGTNGKTTVTHLLSHILCENKLYAPFAGNIGTPLCKYAYSKKYEKIDWVVAELSSYQIEISPEVKPNIGIWTTFTEDHLERHKTLENYFNIKKSLLEKSDFRIYNYDDKNLRNHYSSLSKGVWITTSLDKSNFIQCDYWIDDQAFIIERGKRLFKLEHFSLKGIHNLQNLLLVIAAARKVGLSGKKIKDSLSNYKQLPHRMETIYKNNDLEIINDSKATNFDSSIAGINSIEGQIIIISGGRLKGNKYSEWVQVLKQKVKCIFLFGESSKVLKMALINEGFKKDIFEFSELKELLNFVFHYLQNNKVGTLLFSPSCSSFDQFKNYEERGDHFKKLISEKLKVN.

127-133 (GTNGKTT) contributes to the ATP binding site.

Belongs to the MurCDEF family.

Its subcellular location is the cytoplasm. The enzyme catalyses UDP-N-acetyl-alpha-D-muramoyl-L-alanine + D-glutamate + ATP = UDP-N-acetyl-alpha-D-muramoyl-L-alanyl-D-glutamate + ADP + phosphate + H(+). It participates in cell wall biogenesis; peptidoglycan biosynthesis. Functionally, cell wall formation. Catalyzes the addition of glutamate to the nucleotide precursor UDP-N-acetylmuramoyl-L-alanine (UMA). The polypeptide is UDP-N-acetylmuramoylalanine--D-glutamate ligase (Prochlorococcus marinus (strain MIT 9312)).